The chain runs to 149 residues: MSNESNDLEKNISHLDPTGVDNAYIPPEQPETKHSRFNIDRDTLRNHFIAAVGEFCGTFMFLWCAYVICNVANHDVALTTEPEGSHPGQLIMIALGFGFSVMFSIWCFWWGFEPSRFSLFVFGQSHLSSQMCSDVVSSDHCWDGCWWCR.

The disordered stretch occupies residues 1–35; that stretch reads MSNESNDLEKNISHLDPTGVDNAYIPPEQPETKHS. The Cytoplasmic segment spans residues 1 to 47; the sequence is MSNESNDLEKNISHLDPTGVDNAYIPPEQPETKHSRFNIDRDTLRNH. A helical membrane pass occupies residues 48 to 68; the sequence is FIAAVGEFCGTFMFLWCAYVI. Over 69-89 the chain is Extracellular; it reads CNVANHDVALTTEPEGSHPGQ. A helical membrane pass occupies residues 90–110; it reads LIMIALGFGFSVMFSIWCFWW. Residues 111–149 lie on the Cytoplasmic side of the membrane; sequence GFEPSRFSLFVFGQSHLSSQMCSDVVSSDHCWDGCWWCR.

This sequence belongs to the MIP/aquaporin (TC 1.A.8) family.

It is found in the endoplasmic reticulum membrane. Its subcellular location is the cell membrane. Water channel required to facilitate the transport of water across membranes. Involved in freeze tolerance, osmotolerance and cell flocculation in liquid cultures. Is non-functional in most laboratory strains. The polypeptide is Aquaporin-like protein 2 (AQY2-2) (Saccharomyces cerevisiae (strain RM11-1a) (Baker's yeast)).